The sequence spans 690 residues: Capsid readthrough protein (690 aa).

Residues 451–509 (LIERRINLKKLLLEEAELERRERDMTMIADEEQRTLLHRLESSRVEATHAVAKAEADAR) are a coiled coil. The Involved in virus transmission by the vector motif lies at 553–556 (KTER). Positions 583-628 (GSSSQTVSSGANIGSRSQSLTRGRSASQPLSSVGGSTRGVNNNISN) are disordered.

This sequence belongs to the virgaviridae capsid protein family.

Its subcellular location is the virion. In terms of biological role, self-assembles to form a helical capsid wrapping up the viral genomic DNA. Minor capsid protein involved in virus transmission by the vector S.subterranea. This is Capsid readthrough protein from Beta macrocarpa (Beet).